Consider the following 218-residue polypeptide: Capsid protein (218 aa).

N-acetylmethionine; by host is present on Met-1. Residues 1–28 (MDKSESTSAGRNRRRRPRRGSRSAPSSA) form a disordered region. Residues 11–21 (RNRRRRPRRGS) show a composition bias toward basic residues.

It belongs to the cucumovirus capsid protein family.

The protein localises to the virion. Its function is as follows. Capsid protein. Probably binds RNA and plays a role in packaging. The polypeptide is Capsid protein (Cucumis sativus (Cucumber)).